A 57-amino-acid chain; its full sequence is Myrmicitoxin(1)-Pm7a (57 aa).

Residues 1-23 (MMKIIYAFLLIAVVAFMGSGIMA) form the signal peptide. The propeptide occupies 24-31 (EPLAEAIA).

The protein belongs to the formicidae venom clade 4 family. Expressed by the venom gland.

It localises to the secreted. In terms of biological role, probable neurotoxin. This chain is Myrmicitoxin(1)-Pm7a, found in Pogonomyrmex maricopa (Maricopa harvester ant).